The primary structure comprises 231 residues: MIPSNKRNARILSITTLLLLLVFFVAQNANFLTVEIKEETSKAFSTNMDNMAGGSSREYAAMPTSTTNKGSSEVDEEINEIKQKVGLQQPIASVDDSLSAIKNDKGSRITKAFNVQKEYSLILDLSPIIIFSKSTCSYSKGMKELLENEYQFIPNYYIIELDKHGHGEELQEYIKLVTGRGTVPNLLVNGVSRGGNEEIKKLHTQGKLLESLQVWSDGKFSVEQREKPSNN.

The N-terminal stretch at 1–29 is a signal peptide; it reads MIPSNKRNARILSITTLLLLLVFFVAQNA. The Glutaredoxin domain maps to 116 to 219; it reads QKEYSLILDL…ESLQVWSDGK (104 aa). Residue cysteine 136 coordinates [2Fe-2S] cluster.

It belongs to the glutaredoxin family. Monothiol subfamily.

It is found in the vacuole. The sequence is that of Monothiol glutaredoxin-6 (GRX6) from Saccharomyces cerevisiae (strain ATCC 204508 / S288c) (Baker's yeast).